Reading from the N-terminus, the 416-residue chain is MKITVLGAGVVGTAAAYYLAADGHEVTVIERHAAPARGTSQSNAGLVSPGDATAWASPAALKTFLRGLYNHDLGIKVRLRFDPYFLAWSLRFLRQCTVARLRANSQVKLRLALYSRDCINAISADTGIHYDERKKGILYFFRSQHSLNTGTDNYRYLAEHGLPIEIVGRDRLVELEPGLAGVKEKIAGGVYSPIDQTGDSRLFVDNLAAYASEKLGVKFLFGTTVEGLDIQGDRVRAVMTSAGPVTGDAVVISMGPESGLLGRRYGIDLPVYPVKGYTATIPLEDESKGPTIGGADEDQLMAYSRLGNRLRLASTAEFTGFDRTHKPSDFTTMFRTARDLFPGAFDEKKAELWAGLRPMMPGSVPVIGQARYKNLYLDTGHGHVGWTMACGSGKFLADLVAGRKPEIDPQGLVYGG.

3 to 17 serves as a coordination point for FAD; sequence ITVLGAGVVGTAAAY.

Belongs to the DadA oxidoreductase family. It depends on FAD as a cofactor.

It carries out the reaction a D-alpha-amino acid + A + H2O = a 2-oxocarboxylate + AH2 + NH4(+). In terms of biological role, oxidative deamination of D-amino acids. This is D-amino acid dehydrogenase 2 (dadA2) from Mesorhizobium japonicum (strain LMG 29417 / CECT 9101 / MAFF 303099) (Mesorhizobium loti (strain MAFF 303099)).